The primary structure comprises 62 residues: Large ribosomal subunit protein eL37 (62 aa).

4 residues coordinate Zn(2+): Cys20, Cys23, Cys35, and Cys38. The C4-type zinc finger occupies 20-38; that stretch reads CRRCGRHAFNVAKGYCAAC.

The protein belongs to the eukaryotic ribosomal protein eL37 family. Requires Zn(2+) as cofactor.

Its function is as follows. Binds to the 23S rRNA. The protein is Large ribosomal subunit protein eL37 of Staphylothermus marinus (strain ATCC 43588 / DSM 3639 / JCM 9404 / F1).